The sequence spans 477 residues: Aspartyl/glutamyl-tRNA(Asn/Gln) amidotransferase subunit B (477 aa).

Belongs to the GatB/GatE family. GatB subfamily. In terms of assembly, heterotrimer of A, B and C subunits.

The catalysed reaction is L-glutamyl-tRNA(Gln) + L-glutamine + ATP + H2O = L-glutaminyl-tRNA(Gln) + L-glutamate + ADP + phosphate + H(+). It catalyses the reaction L-aspartyl-tRNA(Asn) + L-glutamine + ATP + H2O = L-asparaginyl-tRNA(Asn) + L-glutamate + ADP + phosphate + 2 H(+). Its function is as follows. Allows the formation of correctly charged Asn-tRNA(Asn) or Gln-tRNA(Gln) through the transamidation of misacylated Asp-tRNA(Asn) or Glu-tRNA(Gln) in organisms which lack either or both of asparaginyl-tRNA or glutaminyl-tRNA synthetases. The reaction takes place in the presence of glutamine and ATP through an activated phospho-Asp-tRNA(Asn) or phospho-Glu-tRNA(Gln). The polypeptide is Aspartyl/glutamyl-tRNA(Asn/Gln) amidotransferase subunit B (Sulfurovum sp. (strain NBC37-1)).